The primary structure comprises 300 residues: Tyrosine recombinase XerC (300 aa).

The Core-binding (CB) domain occupies 2–88 (IQEGKLEQQF…SLRSFYTFLL (87 aa)). The Tyr recombinase domain occupies 109-294 (RLPKFFYSEE…TKEHLKSTYM (186 aa)). Residues Arg150, Lys174, His246, Arg249, and His272 contribute to the active site. The active-site O-(3'-phospho-DNA)-tyrosine intermediate is the Tyr281.

The protein belongs to the 'phage' integrase family. XerC subfamily. In terms of assembly, forms a cyclic heterotetrameric complex composed of two molecules of XerC and two molecules of XerD.

It localises to the cytoplasm. Functionally, site-specific tyrosine recombinase, which acts by catalyzing the cutting and rejoining of the recombining DNA molecules. The XerC-XerD complex is essential to convert dimers of the bacterial chromosome into monomers to permit their segregation at cell division. It also contributes to the segregational stability of plasmids. In Listeria monocytogenes serotype 4b (strain F2365), this protein is Tyrosine recombinase XerC.